The following is a 594-amino-acid chain: Cationic amino acid transporter 1 (594 aa).

Position 2 is an N-acetylalanine (Ala2). Residues 2-78 (ASGGGDDGLR…EMKKTLTWWD (77 aa)) lie on the Cytoplasmic side of the membrane. Residues 79 to 99 (LMWFGIGAVIGSGIFVLTGLE) traverse the membrane as a helical segment. Residues 100-104 (ARNHS) are Extracellular-facing. Asn102 is a glycosylation site (N-linked (GlcNAc...) asparagine). Residues 105–125 (GPAVVLSYVVSGVSAMLSVFC) form a helical membrane-spanning segment. The Cytoplasmic portion of the chain corresponds to 126–149 (YTEFAVEIPVAGGSFAYLRVELGD). The helical transmembrane segment at 150-170 (FMAFIAAGNIILEYVVGGAAV) threads the bilayer. The Extracellular portion of the chain corresponds to 171–201 (ARSWTSYFATLLNHKPEDFRIIVHKLGEDYS). Residues 202-222 (HLDPIAVGVCAIICVLAVVGT) form a helical membrane-spanning segment. The Cytoplasmic portion of the chain corresponds to 223–227 (KGSSR). Residues 228-248 (FNYIASIIHMVVILFVIIAGF) form a helical membrane-spanning segment. Over 249–266 (TKADVKNYSDFTPYGVRG) the chain is Extracellular. An N-linked (GlcNAc...) asparagine glycan is attached at Asn255. Residues 267-287 (VFKSAAVLFFAYIGFDAVSTM) form a helical membrane-spanning segment. The Cytoplasmic portion of the chain corresponds to 288–297 (AEETKNPGRD). A helical membrane pass occupies residues 298–318 (IPIGLVGSMVVTTVCYCLMAV). Residues 319–348 (TLCLMQPYQQIDPDAPFSVAFSAVGWDWAK) lie on the Extracellular side of the membrane. A helical transmembrane segment spans residues 349–369 (YIVAFGALKGMTTVLLVGAIG). Residues 370 to 393 (QARYMTHIARAHMMPPWLAQVNAK) lie on the Cytoplasmic side of the membrane. A helical membrane pass occupies residues 394 to 414 (TGTPINATVVMLAATALIAFF). The Extracellular portion of the chain corresponds to 415–418 (TKLK). The chain crosses the membrane as a helical span at residues 419-439 (ILADLLSVSTLFIFMFVAVAL). The Cytoplasmic portion of the chain corresponds to 440-457 (LVRRYYVTGETSTRDRNK). A helical membrane pass occupies residues 458-478 (FLVFLGLILASSTATAVYWAL). The Extracellular segment spans residues 479–483 (EEEGW). Residues 484–504 (IGYCITVPIWFLSTVAMKFLV) form a helical membrane-spanning segment. At 505–511 (PQARAPK) the chain is on the cytoplasmic side. Residues 512 to 532 (IWGVPLVPWLPSASIAINIFL) form a helical membrane-spanning segment. The Extracellular segment spans residues 533–543 (LGSIDTKSFVR). A helical membrane pass occupies residues 544–564 (FAIWTGILLIYYVLFGLHATY). Topologically, residues 565–594 (DTAKATLKEKQALQKAEEGGVVADNSCSAT) are cytoplasmic.

This sequence belongs to the amino acid-polyamine-organocation (APC) superfamily. Cationic amino acid transporter (CAT) (TC 2.A.3.3) family. In terms of tissue distribution, expressed in roots, stems, flowers, petioles, seeds, siliques, and leaves. Mostly present in major veins.

Its subcellular location is the membrane. Inhibited by the protonophore 2,4-dinitrophenol. Its function is as follows. High-affinity permease involved in the transport of the cationic amino acids (e.g. arginine, lysine, histidine, citrulline, valine, and glutamate). Transport mostly basic amino acids, and, to a lower extent neutral and acidic amino acids. May function as a proton symporter. The protein is Cationic amino acid transporter 1 (CAT1) of Arabidopsis thaliana (Mouse-ear cress).